A 536-amino-acid polypeptide reads, in one-letter code: Enterobactin synthase component E (536 aa).

7 residues coordinate substrate: asparagine 235, serine 240, glycine 309, valine 331, alanine 335, aspartate 415, and lysine 432. The tract at residues 438–439 (GG) is phosphopantetheine binding. Lysine 441 serves as a coordination point for substrate.

It belongs to the ATP-dependent AMP-binding enzyme family. EntE subfamily. Proteins EntB, EntD, EntE, and EntF form a multienzyme complex called enterobactin synthase. Monomer. EntA and EntE interact together.

The protein resides in the membrane. The catalysed reaction is 3 2,3-dihydroxybenzoate + 3 L-serine + 6 ATP = enterobactin + 6 AMP + 6 diphosphate + 4 H(+). It carries out the reaction 2,3-dihydroxybenzoate + holo-[ACP] + ATP = 2,3-dihydroxybenzoyl-[ACP] + AMP + diphosphate. It catalyses the reaction 2,3-dihydroxybenzoyl-5'-AMP + holo-[ACP] = 2,3-dihydroxybenzoyl-[ACP] + AMP + H(+). It participates in siderophore biosynthesis; enterobactin biosynthesis. Its activity is regulated as follows. Inhibited by the adenylate analogs, 5'-O-[N-(salicyl)sulfamoyl]adenosine (Sal-AMS) and 5'-O-[N-(2,3-dihydroxybenzoyl)sulfamoyl]adenosine (DHB-AMS). Adenylation of 2,3-dihydroxybenzoate (DHB) is enhanced by a protein-protein interaction between the EntA and EntE. Functionally, involved in the biosynthesis of the siderophore enterobactin (enterochelin), which is a macrocyclic trimeric lactone of N-(2,3-dihydroxybenzoyl)-serine. The serine trilactone serves as a scaffolding for the three catechol functionalities that provide hexadentate coordination for the tightly ligated iron(2+) atoms. EntE processes via a two-step adenylation-ligation reaction (bi-uni-uni-bi ping-pong mechanism). First, it catalyzes the activation of the carboxylate group of 2,3-dihydroxy-benzoate (DHB), via a reversible ATP-dependent pyrophosphate exchange reactions to yield the acyladenylate intermediate 2,3-dihydroxybenzoyl-AMP. It can also transfer AMP to salicylate, 2,4-dihydroxybenzoate, gentisate and 2,3,4-trihydroxybenzoate. In the second step, DHB is transferred from 2,3-dihydroxybenzoyl-AMP onto the phosphopantetheinylated EntB (holo-EntB) to form DHB-holo-EntB. Then this product will serve in the formation of the amide bond between 2,3-dihydroxybenzoate (DHB) and L-serine. It can also transfer adenylated salicylate to holo-EntB. In Escherichia coli (strain K12), this protein is Enterobactin synthase component E.